A 144-amino-acid chain; its full sequence is uncharacterized protein (144 aa).

A run of 2 helical transmembrane segments spans residues 10–30 and 60–80; these read ILTR…GLGP and YVFL…AIAV.

The protein resides in the membrane. This is an uncharacterized protein from Saccharomyces cerevisiae (strain ATCC 204508 / S288c) (Baker's yeast).